A 388-amino-acid polypeptide reads, in one-letter code: MVSVSEIRQAQRAEGPATILAIGTATPPNCVDQSTYPDYYFRITNSEHMTDLKEKFQRMCDKSMIKKRYMHVTEEILKENPSMCAYMAPSLDARQDIVVVEVPRLGKEAAVKAIKEWGQPKSKITHLIFCTTSGVDMPGADYQLTKLLGLRPYVKRYMMYQQGCFAGGTVLRLAKDLAENNKGARVLVVCSEITAVTFRGPSDTHLDSLVGQALFGDGAAAVIVGSDPIPQIEKPLFELVWTAQTIAPDSEGAIDGHLREVGLTFHLLKDVPGIVSKNIGKALSEAFDPLNISDYNSIFWIAHPGGPAILDQVAQKLGLKPEKMKATRDVLSDYGNMSSACVTFHLDEIEKSVENGLKTTGKDLEWGVLFGFGPGLSLETVVLHSVAI.

Residue Cys164 is part of the active site.

The protein belongs to the thiolase-like superfamily. Chalcone/stilbene synthases family.

The enzyme catalyses (E)-4-coumaroyl-CoA + 3 malonyl-CoA + 3 H(+) = 2',4,4',6'-tetrahydroxychalcone + 3 CO2 + 4 CoA. The protein operates within secondary metabolite biosynthesis; flavonoid biosynthesis. In terms of biological role, the primary product of this enzyme is 4,2',4',6'-tetrahydroxychalcone (also termed naringenin-chalcone or chalcone) which can under specific conditions spontaneously isomerize into naringenin. This chain is Chalcone synthase (CHS), found in Vigna unguiculata (Cowpea).